The following is a 65-amino-acid chain: Alpha-conotoxine-like Am1.5 (65 aa).

The signal sequence occupies residues 1–21 (MGMRMMFTVFLLVVLATTVVS). Positions 22-46 (FMSGRAFRDRNAAAKVSDLIALKAR) are excised as a propeptide. Position 49 is a 4-carboxyglutamate (Glu49). The ser-Xaa-Pro motif, crucial for potent interaction with nAChR stretch occupies residues 52-54 (SHP). 4-hydroxyproline is present on residues Pro54 and Pro61. Glu62 carries the 4-carboxyglutamate modification.

The protein belongs to the conotoxin A superfamily. Contains 2 disulfide bonds. As to expression, expressed by the venom duct.

It is found in the secreted. In terms of biological role, alpha-conotoxins act on postsynaptic membranes, they bind to the nicotinic acetylcholine receptors (nAChR) and thus inhibit them. This Conus amadis (Amadis cone) protein is Alpha-conotoxine-like Am1.5.